We begin with the raw amino-acid sequence, 190 residues long: Protein GrpE (190 aa).

Residues 1–33 (MSEQEKDQNNAEPQVETVEEQQAAAAAEAVEPT) are disordered. The segment covering 11-32 (AEPQVETVEEQQAAAAAEAVEP) has biased composition (low complexity).

It belongs to the GrpE family. In terms of assembly, homodimer.

It is found in the cytoplasm. Its function is as follows. Participates actively in the response to hyperosmotic and heat shock by preventing the aggregation of stress-denatured proteins, in association with DnaK and GrpE. It is the nucleotide exchange factor for DnaK and may function as a thermosensor. Unfolded proteins bind initially to DnaJ; upon interaction with the DnaJ-bound protein, DnaK hydrolyzes its bound ATP, resulting in the formation of a stable complex. GrpE releases ADP from DnaK; ATP binding to DnaK triggers the release of the substrate protein, thus completing the reaction cycle. Several rounds of ATP-dependent interactions between DnaJ, DnaK and GrpE are required for fully efficient folding. In Alcanivorax borkumensis (strain ATCC 700651 / DSM 11573 / NCIMB 13689 / SK2), this protein is Protein GrpE.